A 302-amino-acid polypeptide reads, in one-letter code: Acetylglutamate kinase (302 aa).

Residues 67 to 68, R89, and N194 contribute to the substrate site; that span reads GG.

Belongs to the acetylglutamate kinase family. ArgB subfamily.

The protein localises to the cytoplasm. The enzyme catalyses N-acetyl-L-glutamate + ATP = N-acetyl-L-glutamyl 5-phosphate + ADP. It functions in the pathway amino-acid biosynthesis; L-arginine biosynthesis; N(2)-acetyl-L-ornithine from L-glutamate: step 2/4. In terms of biological role, catalyzes the ATP-dependent phosphorylation of N-acetyl-L-glutamate. The polypeptide is Acetylglutamate kinase (Hahella chejuensis (strain KCTC 2396)).